Here is a 187-residue protein sequence, read N- to C-terminus: Ribosome-recycling factor (187 aa).

This sequence belongs to the RRF family.

It localises to the cytoplasm. Its function is as follows. Responsible for the release of ribosomes from messenger RNA at the termination of protein biosynthesis. May increase the efficiency of translation by recycling ribosomes from one round of translation to another. This is Ribosome-recycling factor from Paracoccus zeaxanthinifaciens.